Consider the following 186-residue polypeptide: Ribosome-recycling factor (186 aa).

This sequence belongs to the RRF family.

The protein resides in the cytoplasm. In terms of biological role, responsible for the release of ribosomes from messenger RNA at the termination of protein biosynthesis. May increase the efficiency of translation by recycling ribosomes from one round of translation to another. This Paraburkholderia phymatum (strain DSM 17167 / CIP 108236 / LMG 21445 / STM815) (Burkholderia phymatum) protein is Ribosome-recycling factor.